A 189-amino-acid polypeptide reads, in one-letter code: Nucleoside diphosphate kinase 6 (189 aa).

Positions 19, 68, 96, 102, 116, and 126 each coordinate ATP. Catalysis depends on His129, which acts as the Pros-phosphohistidine intermediate.

This sequence belongs to the NDK family. It depends on Mg(2+) as a cofactor.

It catalyses the reaction a 2'-deoxyribonucleoside 5'-diphosphate + ATP = a 2'-deoxyribonucleoside 5'-triphosphate + ADP. The catalysed reaction is a ribonucleoside 5'-diphosphate + ATP = a ribonucleoside 5'-triphosphate + ADP. Functionally, major role in the synthesis of nucleoside triphosphates other than ATP. The ATP gamma phosphate is transferred to the NDP beta phosphate via a ping-pong mechanism, using a phosphorylated active-site intermediate. The protein is Nucleoside diphosphate kinase 6 (Nme6) of Mus musculus (Mouse).